A 272-amino-acid polypeptide reads, in one-letter code: Oligodendrocyte transcription factor 3 (272 aa).

Low complexity predominate over residues 1-14 (MNSDSSSVSSRASS). Residues 1-71 (MNSDSSSVSS…KAAGESSKYK (71 aa)) are disordered. Positions 24 to 33 (DHHHRHHHHQ) are enriched in basic residues. Residues 36–46 (RLNSVSSTQGD) are compositionally biased toward polar residues. A coiled-coil region spans residues 68–89 (SKYKIKKQLSEQDLQQLRLKIN). Positions 83 to 137 (QLRLKINGRERKRMHDLNLAMDGLREVMPYAHGPSVRKLSKIATLLLARNYILML) constitute a bHLH domain.

Its subcellular location is the nucleus. In terms of biological role, may determine the distinct specification program of class A neurons in the dorsal part of the spinal cord and suppress specification of class B neurons. The sequence is that of Oligodendrocyte transcription factor 3 (OLIG3) from Homo sapiens (Human).